The following is a 207-amino-acid chain: 3-demethoxyubiquinol 3-hydroxylase (207 aa).

Residues Glu-56, Glu-86, His-89, Glu-138, Glu-170, and His-173 each contribute to the Fe cation site.

The protein belongs to the COQ7 family. Fe cation serves as cofactor.

It is found in the cell membrane. It catalyses the reaction a 5-methoxy-2-methyl-3-(all-trans-polyprenyl)benzene-1,4-diol + AH2 + O2 = a 3-demethylubiquinol + A + H2O. It functions in the pathway cofactor biosynthesis; ubiquinone biosynthesis. In terms of biological role, catalyzes the hydroxylation of 2-nonaprenyl-3-methyl-6-methoxy-1,4-benzoquinol during ubiquinone biosynthesis. The sequence is that of 3-demethoxyubiquinol 3-hydroxylase from Cupriavidus necator (strain ATCC 17699 / DSM 428 / KCTC 22496 / NCIMB 10442 / H16 / Stanier 337) (Ralstonia eutropha).